The chain runs to 624 residues: Penicillin-binding protein 4 (624 aa).

Positions 1–21 (MTMLRKIIGWILLLCIIPLFA) are cleaved as a signal peptide. Glutamate 96 (proton donor; for transglycosylase activity) is an active-site residue. The Acyl-ester intermediate; for transpeptidase activity role is filled by serine 388.

The protein in the N-terminal section; belongs to the glycosyltransferase 51 family. In the C-terminal section; belongs to the transpeptidase family. The N-terminus is blocked.

It localises to the cell membrane. It catalyses the reaction [GlcNAc-(1-&gt;4)-Mur2Ac(oyl-L-Ala-gamma-D-Glu-L-Lys-D-Ala-D-Ala)](n)-di-trans,octa-cis-undecaprenyl diphosphate + beta-D-GlcNAc-(1-&gt;4)-Mur2Ac(oyl-L-Ala-gamma-D-Glu-L-Lys-D-Ala-D-Ala)-di-trans,octa-cis-undecaprenyl diphosphate = [GlcNAc-(1-&gt;4)-Mur2Ac(oyl-L-Ala-gamma-D-Glu-L-Lys-D-Ala-D-Ala)](n+1)-di-trans,octa-cis-undecaprenyl diphosphate + di-trans,octa-cis-undecaprenyl diphosphate + H(+). The catalysed reaction is Preferential cleavage: (Ac)2-L-Lys-D-Ala-|-D-Ala. Also transpeptidation of peptidyl-alanyl moieties that are N-acyl substituents of D-alanine.. Its function is as follows. Cell wall formation. Synthesis of cross-linked peptidoglycan from the lipid intermediates. The enzyme has a penicillin-insensitive transglycosylase N-terminal domain (formation of linear glycan strands) and a penicillin-sensitive transpeptidase C-terminal domain (cross-linking of the peptide subunits). Has a partially redundant function with PBP-2A (pbpA) during spore outgrowth. The protein is Penicillin-binding protein 4 of Bacillus subtilis (strain 168).